We begin with the raw amino-acid sequence, 331 residues long: Serpentine receptor class alpha-9 (331 aa).

Transmembrane regions (helical) follow at residues 26–46 (IDLL…QLVL), 58–78 (LILE…IEAI), 104–124 (YLKV…GLMI), 142–162 (IIGF…GKLF), 189–209 (YFTV…LLKI), 238–258 (VCFL…GVGA), and 275–295 (LCVV…LLLI).

The protein belongs to the nematode receptor-like protein sra family.

The protein resides in the membrane. The sequence is that of Serpentine receptor class alpha-9 (sra-9) from Caenorhabditis elegans.